A 161-amino-acid polypeptide reads, in one-letter code: Allophycocyanin beta chain (161 aa).

An N4-methylasparagine modification is found at Asn71. Cys81 contributes to the (2R,3E)-phycocyanobilin binding site.

Belongs to the phycobiliprotein family. In terms of assembly, heterodimer of an alpha and a beta chain. In terms of processing, contains one covalently linked phycocyanobilin chromophore.

It is found in the cellular thylakoid membrane. Light-harvesting photosynthetic bile pigment-protein from the phycobiliprotein complex. Allophycocyanin has a maximum absorption at approximately 650 nanometers. The protein is Allophycocyanin beta chain (apcB) of Thermosynechococcus vestitus (strain NIES-2133 / IAM M-273 / BP-1).